We begin with the raw amino-acid sequence, 1281 residues long: Dynactin subunit 1 (1281 aa).

The segment at 1–25 (MAQSKRHVYSRTPSGSRMSAEASAR) is disordered. The CAP-Gly domain occupies 48–90 (GATLFATGKWVGVILDEAKGKNDGTVQGRKYFTCDEGHGIFVR). The segment at 99-225 (DGADTTSPET…EEEGLRAQVR (127 aa)) is disordered. Polar residues predominate over residues 102–114 (DTTSPETPDSSAS). 4 positions are modified to phosphothreonine: T108, T145, T146, and T147. A compositionally biased stretch (basic residues) spans 129–152 (SKLRGPKPKKAPTARKTTTRRPKP). The span at 161-205 (AGASSSLGPSGSASAGELSSSEPSTPAQTPLAAPIIPTPALTSPG) shows a compositional bias: low complexity. 2 positions are modified to phosphoserine: S179 and S212. Basic and acidic residues predominate over residues 214 to 225 (SKEEEGLRAQVR). Coiled-coil stretches lie at residues 217–540 (EEGL…QQEA) and 952–1043 (IKEL…QSKR). The segment at 911–1281 (EYDAERPPSK…LHQLHDRLIS (371 aa)) is interaction with HPS6. The tract at residues 1065–1084 (GEEQQRGGAPGQAPGIVPGP) is disordered.

It belongs to the dynactin 150 kDa subunit family. As to quaternary structure, monomer and homodimer. Subunit of dynactin, a multiprotein complex part of a tripartite complex with dynein and a adapter, such as BICDL1, BICD2 or HOOK3. The dynactin complex is built around ACTR1A/ACTB filament and consists of an actin-related filament composed of a shoulder domain, a pointed end and a barbed end. Its length is defined by its flexible shoulder domain. The soulder is composed of 2 DCTN1 subunits, 4 DCTN2 and 2 DCTN3. DCTN1/p150(glued) binds directly to microtubules and to cytoplasmic dynein. The 4 DCNT2 (via N-terminus) bind the ACTR1A filament and act as molecular rulers to determine the length. The pointed end is important for binding dynein-dynactin cargo adapters. Consists of 4 subunits: ACTR10, DCNT4, DCTN5 and DCTN6. The barbed end is composed of a CAPZA1:CAPZB heterodimers, which binds ACTR1A/ACTB filament and dynactin and stabilizes dynactin. Interacts with the C-terminus of MAPRE1, MAPRE2 and MAPRE3. Interacts (via C-terminus) with SNX6. Interacts with CLN3, DYNAP, ECPAS and FBXL5. Interacts with MISP; this interaction regulates its distribution at the cell cortex. Interacts with CEP131. Interacts with CEP126. Interacts with CLIP1. Interacts with dynein intermediate chain and dynein heavy chain. Interacts with PLK1 (via POLO-box domain). Interacts with TBCB. Binds preferentially to tyrosinated microtubules than to detyrosinated microtubules. Interacts with PARD6A. Interacts with HPS6. Interacts with KIF3A. Interacts with BICD2. Interacts with DST (isoform 9). Interacts with DST (isoform 1). Identified in a complex with MREG and RILP. Interacts with BCCIP (isoform 2/alpha). Interacts with DCDC1. Interacts with AKNA. Interacts with DYNC1I2. Interacts with RUFY3 and RUFY4. Ubiquitinated by a SCF complex containing FBXL5, leading to its degradation by the proteasome. Post-translationally, phosphorylation by SLK at Thr-145, Thr-146 and Thr-147 targets DCTN1 to the centrosome. It is uncertain if SLK phosphorylates all three threonines or one or two of them. PLK1-mediated phosphorylation at Ser-179 is essential for its localization in the nuclear envelope, promotes its dissociation from microtubules during early mitosis and positively regulates nuclear envelope breakdown during prophase.

The protein resides in the cytoplasm. It is found in the cytoskeleton. The protein localises to the microtubule organizing center. Its subcellular location is the centrosome. It localises to the centriole. The protein resides in the spindle. It is found in the nucleus envelope. The protein localises to the cell cortex. In terms of biological role, part of the dynactin complex that activates the molecular motor dynein for ultra-processive transport along microtubules. Plays a key role in dynein-mediated retrograde transport of vesicles and organelles along microtubules by recruiting and tethering dynein to microtubules. Binds to both dynein and microtubules providing a link between specific cargos, microtubules and dynein. Essential for targeting dynein to microtubule plus ends, recruiting dynein to membranous cargos and enhancing dynein processivity (the ability to move along a microtubule for a long distance without falling off the track). Can also act as a brake to slow the dynein motor during motility along the microtubule. Can regulate microtubule stability by promoting microtubule formation, nucleation and polymerization and by inhibiting microtubule catastrophe in neurons. Inhibits microtubule catastrophe by binding both to microtubules and to tubulin, leading to enhanced microtubule stability along the axon. Plays a role in metaphase spindle orientation. Plays a role in centriole cohesion and subdistal appendage organization and function. Its recruitment to the centriole in a KIF3A-dependent manner is essential for the maintenance of centriole cohesion and the formation of subdistal appendage. Also required for microtubule anchoring at the mother centriole. Plays a role in primary cilia formation. The polypeptide is Dynactin subunit 1 (DCTN1) (Sus scrofa (Pig)).